A 347-amino-acid chain; its full sequence is Endophilin-A3 (347 aa).

The tract at residues 1–21 (MSVAGLKKQFHKASQLFSEKI) is membrane-binding amphipathic helix. A BAR domain is found at 18 to 249 (SEKISGAEGT…LELRIALASQ (232 aa)). The segment at 60–87 (PNPAYRAKLGMLNTMSKLRGQVKATGYP) is required for dimerization upon membrane association. Positions 180 to 201 (EEEIRQAVEKFEESKELAERSM) form a coiled coil. Residues 218 to 254 (FVEAALDYHRQSTEILQELQNKLELRIALASQVPRRD) are interaction with ARC. The segment at 255-284 (YMPKPVNTSSTNANGVEPSSSSKLTGTDIP) is disordered. Residues 260–284 (VNTSSTNANGVEPSSSSKLTGTDIP) show a composition bias toward polar residues. The SH3 domain occupies 285–344 (SDQPCCRGLYDFEPENEGELGFKEGDIITLTNQIDENWYEGMLRGESGFFPINYVEVIVP).

Belongs to the endophilin family. As to quaternary structure, interacts with SGIP1 and DYDC1. Interacts with FASLG. Interacts with ATXN2. Interacts with BIN2. Interacts with ARC, DNM1 and SYNJ1. As to expression, expressed at high level in testis and at lower level in brain and liver.

The protein resides in the cytoplasm. It localises to the early endosome membrane. Its function is as follows. Implicated in endocytosis. May recruit other proteins to membranes with high curvature. In Rattus norvegicus (Rat), this protein is Endophilin-A3 (Sh3gl3).